Reading from the N-terminus, the 575-residue chain is U3 small nucleolar RNA-associated protein 9 (575 aa).

Composition is skewed to basic and acidic residues over residues 340–355 (NEKN…KLEE) and 364–375 (VQHEKKETETKI). The segment at 340-375 (NEKNNADEADQKKLEEKEEEAQPEVQHEKKETETKI) is disordered. Residues serine 547 and serine 564 each carry the phosphoserine modification.

In terms of assembly, interacts with snoRNA U3. Interacts with MPP10. Component of the ribosomal small subunit (SSU) processome composed of at least 40 protein subunits and snoRNA U3. In the absence of snoRNA3, forms a complex with other t-UTPs. This complex can associate with pre-18S ribosomal RNAs.

The protein resides in the nucleus. It localises to the nucleolus. Involved in nucleolar processing of pre-18S ribosomal RNA. Required for optimal pre-ribosomal RNA transcription by RNA polymerase I together with a subset of U3 proteins required for transcription (t-UTPs). The chain is U3 small nucleolar RNA-associated protein 9 (UTP9) from Saccharomyces cerevisiae (strain ATCC 204508 / S288c) (Baker's yeast).